The following is a 282-amino-acid chain: Nucleotide-binding protein Shew_3314 (282 aa).

Residue 8 to 15 (GRSGSGKS) coordinates ATP. 56 to 59 (DVRN) is a GTP binding site.

The protein belongs to the RapZ-like family.

In terms of biological role, displays ATPase and GTPase activities. This is Nucleotide-binding protein Shew_3314 from Shewanella loihica (strain ATCC BAA-1088 / PV-4).